A 196-amino-acid chain; its full sequence is Flagellin B2 (196 aa).

A propeptide spanning residues 1–12 (MFEFITDEDERG) is cleaved from the precursor.

It belongs to the archaeal flagellin family. In terms of processing, glycosylated.

The protein resides in the archaeal flagellum. Its function is as follows. Flagellin is the subunit protein which polymerizes to form the filaments of archaeal flagella. This chain is Flagellin B2 (flaB2), found in Halobacterium salinarum (strain ATCC 700922 / JCM 11081 / NRC-1) (Halobacterium halobium).